Here is a 796-residue protein sequence, read N- to C-terminus: Histone-lysine N-methyltransferase PRDM9 (796 aa).

Positions 1–23 (MSRTMNTNKPEENSTEGDAGKLE) are disordered. Residues 27–90 (KVKDEFKDIS…QRQAIKPQIN (64 aa)) enclose the KRAB-related domain. The segment at 149-172 (SEHAQKPVCSPEEGNTSGQHFGKK) is disordered. The Zn(2+) site is built by Cys-209, Cys-212, Cys-220, and His-223. Positions 248–362 (PGLRIGPSGI…PGRELLVWYG (115 aa)) constitute an SET domain. Residues 260–262 (AGL), Tyr-295, and 324–325 (NC) contribute to the S-adenosyl-L-methionine site. 292-298 (NSGYSWL) contacts substrate. Tyr-361 is a substrate binding site. Residue Lys-372 is modified to N6,N6,N6-trimethyllysine; alternate. Lys-372 carries the post-translational modification N6-methyllysine; alternate. Lys-376 and Lys-378 each carry N6-methyllysine. Residues 392-415 (HPCFLCSLAFSSQKFLTQHVEWNH) form a C2H2-type 1 zinc finger. The Zn(2+) site is built by Cys-394, Cys-397, His-410, and His-415. The segment covering 443 to 457 (FDSQNKNDKASNEVK) has biased composition (basic and acidic residues). Residues 443–497 (FDSQNKNDKASNEVKRKSKPRHKWTRQRISTAFSSTLKEQMRSEESKRTVEEELR) form a disordered region. Residues 458-468 (RKSKPRHKWTR) show a composition bias toward basic residues. Polar residues predominate over residues 469-480 (QRISTAFSSTLK). Basic and acidic residues predominate over residues 481–497 (EQMRSEESKRTVEEELR). The C2H2-type 2; degenerate zinc finger occupies 522-540 (QCGQCFSDKSNVSEHQRTH). C2H2-type zinc fingers lie at residues 546–568 (YICR…QRTH), 574–596 (YICR…QRTH), 602–624 (YICR…QRTH), 630–652 (YICR…QRTH), 658–680 (YICR…QRTH), 686–708 (YICR…LRTH), 714–736 (YICR…QRTH), 742–764 (YICR…QRTH), and 770–792 (YICR…QRTH). Residues Cys-716, Cys-719, His-732, His-736, Cys-744, Cys-747, His-760, His-764, Cys-772, Cys-775, His-788, and His-792 each coordinate Zn(2+).

It belongs to the class V-like SAM-binding methyltransferase superfamily. As to quaternary structure, homodimer. Interacts with EHMT2 and CDYL; interaction only takes place when PRDM9 is bound to hotspot DNA. Interacts with CXXC1; this interaction does not link PRDM9-activated recombination hotspot sites with DSB machinery and is not required for the hotspot recognition pathway. Forms a complex with EWSR1, REC8, SYCP3 and SYCP1; complex formation is dependent of phosphorylated form of REC8 and requires PRDM9 bound to hotspot DNA; EWSR1 joins PRDM9 with the chromosomal axis through REC8. Post-translationally, mono-methylated; automethylated. Tri-methylated; automethylated. Mono-methylation is predominant; automethylation is lower and slower than H3 peptide methylation and is in a highest S-adenosyl-L-methionine concentration-dependent. There are two major sites for automethylation at Lys-372 and Lys-378. Lysines can be simultaneously methylated, such as Lys-372(me3)/Lys-376(me1), Lys-372(me1)/Lys-378(me1) and Lys-372(me1)/Lys-376(me1)/Lys-378(me1). Automethylation is an intramolecular (cis) process.

The protein resides in the nucleus. The protein localises to the chromosome. It carries out the reaction L-lysyl-[protein] + S-adenosyl-L-methionine = N(6)-methyl-L-lysyl-[protein] + S-adenosyl-L-homocysteine + H(+). The enzyme catalyses N(6)-methyl-L-lysyl-[protein] + S-adenosyl-L-methionine = N(6),N(6)-dimethyl-L-lysyl-[protein] + S-adenosyl-L-homocysteine + H(+). It catalyses the reaction L-lysyl(4)-[histone H3] + 3 S-adenosyl-L-methionine = N(6),N(6),N(6)-trimethyl-L-lysyl(4)-[histone H3] + 3 S-adenosyl-L-homocysteine + 3 H(+). The catalysed reaction is L-lysyl(36)-[histone H3] + 3 S-adenosyl-L-methionine = N(6),N(6),N(6)-trimethyl-L-lysyl(36)-[histone H3] + 3 S-adenosyl-L-homocysteine + 3 H(+). It carries out the reaction L-lysyl(9)-[histone H3] + 3 S-adenosyl-L-methionine = N(6),N(6),N(6)-trimethyl-L-lysyl(9)-[histone H3] + 3 S-adenosyl-L-homocysteine + 3 H(+). The enzyme catalyses L-lysyl(20)-[histone H4] + S-adenosyl-L-methionine = N(6)-methyl-L-lysyl(20)-[histone H4] + S-adenosyl-L-homocysteine + H(+). It catalyses the reaction N(6)-methyl-L-lysyl(20)-[histone H4] + S-adenosyl-L-methionine = N(6),N(6)-dimethyl-L-lysyl(20)-[histone H4] + S-adenosyl-L-homocysteine + H(+). Histone methyltransferase that sequentially mono-, di-, and tri-methylates both 'Lys-4' (H3K4) and 'Lys-36' (H3K36) of histone H3 to produce respectively trimethylated 'Lys-4' (H3K4me3) and trimethylated 'Lys-36' (H3K36me3) histone H3 and plays a key role in meiotic prophase by determining hotspot localization thereby promoting meiotic recombination. Can also methylate all four core histones with H3 being the best substrate and the most highly modified. Is also able, on one hand, to mono and di-methylate H4K20 and on other hand to trimethylate H3K9 with the di-methylated H3K9 as the best substrate. During meiotic prophase, binds specific DNA sequences through its zinc finger domains thereby determining hotspot localization where it promotes local H3K4me3 and H3K36me3 enrichment on the same nucleosomes through its histone methyltransferase activity. Thereby promotes double-stranded breaks (DSB) formation, at this subset of PRDM9-binding sites, that initiates meiotic recombination for the proper meiotic progression. During meiotic progression hotspot-bound PRDM9 interacts with several complexes; in early leptonema binds CDYL and EHMT2 followed by EWSR1 and CXXC1 by the end of leptonema. EWSR1 joins PRDM9 with the chromosomal axis through REC8. In this way, controls the DSB repair pathway, pairing of homologous chromosomes and sex body formation. Moreover plays a central role in the transcriptional activation of genes during early meiotic prophase thanks to H3K4me3 and H3K36me3 enrichment that represents a specific tag for epigenetic transcriptional activation. In addition performs automethylation. Acetylation and phosphorylation of histone H3 attenuate or prevent histone H3 methylation. The chain is Histone-lysine N-methyltransferase PRDM9 from Rattus norvegicus (Rat).